The primary structure comprises 207 residues: Large ribosomal subunit protein uL4 (207 aa).

The interval threonine 48–isoleucine 78 is disordered. Residues glycine 60 to glycine 71 are compositionally biased toward basic residues.

The protein belongs to the universal ribosomal protein uL4 family. In terms of assembly, part of the 50S ribosomal subunit.

Functionally, one of the primary rRNA binding proteins, this protein initially binds near the 5'-end of the 23S rRNA. It is important during the early stages of 50S assembly. It makes multiple contacts with different domains of the 23S rRNA in the assembled 50S subunit and ribosome. Forms part of the polypeptide exit tunnel. The polypeptide is Large ribosomal subunit protein uL4 (Bacillus pumilus (strain SAFR-032)).